The sequence spans 349 residues: MIEKLDSIEKKYEELENLIGNPEIIADIARWQEYVKAHAELADIVAVYRDYKKVVKEIQDTIALMKEEPDEDLREMAQAELDELTEKKDNLENRLKMLLLPKDPNDEKNVILEIRAGTGGEEAALFAADLFRMYSRYAERQGWRTEILDANYTDIGGFKEVISLIEGKGVYSRMKFESGVHRVQRIPTTESGGRIHTSAATVAVLPEAEEVDVQIDPDDLRIDVFCSSGHGGQSVNTTQSAVRITHIPTGIVVSMQDEKSQHKNKEKAMKVLRARLLDRVQQEHQQKIASTRKSMVGTGDRSERIRTYNFPQNRVTDHRVGLTLHRLDSVLDGDLDEIIDTLILKGGQA.

Position 233 is an N5-methylglutamine (Gln-233).

Belongs to the prokaryotic/mitochondrial release factor family. In terms of processing, methylated by PrmC. Methylation increases the termination efficiency of RF1.

The protein localises to the cytoplasm. In terms of biological role, peptide chain release factor 1 directs the termination of translation in response to the peptide chain termination codons UAG and UAA. The sequence is that of Peptide chain release factor 1 from Pelotomaculum thermopropionicum (strain DSM 13744 / JCM 10971 / SI).